Here is a 127-residue protein sequence, read N- to C-terminus: Large ribosomal subunit protein bL19 (127 aa).

It belongs to the bacterial ribosomal protein bL19 family.

This protein is located at the 30S-50S ribosomal subunit interface and may play a role in the structure and function of the aminoacyl-tRNA binding site. The sequence is that of Large ribosomal subunit protein bL19 from Acidovorax ebreus (strain TPSY) (Diaphorobacter sp. (strain TPSY)).